The sequence spans 351 residues: Probable dual-specificity RNA methyltransferase RlmN (351 aa).

Glutamate 92 functions as the Proton acceptor in the catalytic mechanism. In terms of domain architecture, Radical SAM core spans 98-334; it reads SGDRLTVCVS…VRWSKGLGAD (237 aa). A disulfide bridge links cysteine 105 with cysteine 337. Residues cysteine 112, cysteine 116, and cysteine 119 each contribute to the [4Fe-4S] cluster site. Residues 159 to 160, serine 189, 218 to 220, and asparagine 294 contribute to the S-adenosyl-L-methionine site; these read GE and SLH. Cysteine 337 (S-methylcysteine intermediate) is an active-site residue.

It belongs to the radical SAM superfamily. RlmN family. [4Fe-4S] cluster serves as cofactor.

It is found in the cytoplasm. The catalysed reaction is adenosine(2503) in 23S rRNA + 2 reduced [2Fe-2S]-[ferredoxin] + 2 S-adenosyl-L-methionine = 2-methyladenosine(2503) in 23S rRNA + 5'-deoxyadenosine + L-methionine + 2 oxidized [2Fe-2S]-[ferredoxin] + S-adenosyl-L-homocysteine. It catalyses the reaction adenosine(37) in tRNA + 2 reduced [2Fe-2S]-[ferredoxin] + 2 S-adenosyl-L-methionine = 2-methyladenosine(37) in tRNA + 5'-deoxyadenosine + L-methionine + 2 oxidized [2Fe-2S]-[ferredoxin] + S-adenosyl-L-homocysteine. Its function is as follows. Specifically methylates position 2 of adenine 2503 in 23S rRNA and position 2 of adenine 37 in tRNAs. This is Probable dual-specificity RNA methyltransferase RlmN from Synechococcus sp. (strain ATCC 27144 / PCC 6301 / SAUG 1402/1) (Anacystis nidulans).